The following is a 521-amino-acid chain: Cytochrome P450 1A1 (521 aa).

Substrate is bound at residue Phe-229. Cys-463 provides a ligand contact to heme.

The protein belongs to the cytochrome P450 family. Heme is required as a cofactor.

Its subcellular location is the endoplasmic reticulum membrane. The protein resides in the microsome membrane. The catalysed reaction is an organic molecule + reduced [NADPH--hemoprotein reductase] + O2 = an alcohol + oxidized [NADPH--hemoprotein reductase] + H2O + H(+). Functionally, cytochromes P450 are a group of heme-thiolate monooxygenases. They oxidize a variety of structurally unrelated compounds, including steroids, fatty acids, and xenobiotics. The protein is Cytochrome P450 1A1 (cyp1a1) of Chaetodon capistratus (Four-eye butterflyfish).